A 177-amino-acid chain; its full sequence is Large ribosomal subunit protein uL6 (177 aa).

The protein belongs to the universal ribosomal protein uL6 family. Part of the 50S ribosomal subunit.

Functionally, this protein binds to the 23S rRNA, and is important in its secondary structure. It is located near the subunit interface in the base of the L7/L12 stalk, and near the tRNA binding site of the peptidyltransferase center. The sequence is that of Large ribosomal subunit protein uL6 from Rickettsia felis (strain ATCC VR-1525 / URRWXCal2) (Rickettsia azadi).